We begin with the raw amino-acid sequence, 477 residues long: MSNIYIQEPPSNGKVLLKTTAGEIDIELWSKEAPKACRNFVQLCLEGYYDNTIFHRVVPEFIIQGGDPTGTGTGGESVFGKPFRDEFHSRLRFNRRGLVAMANAGPHDNGSQFFFTLGRADELNNKHTIFGKVTGDTIYNILRLAEVDIGEDERPVNPHKIKCTEVLFNPFDDIIPRIDKKTKKDEEEEGKKSKAKGTKNFNLLSFGEEAEEDEEEVNEVSKVMRGKSKSSHDLLKDDPRLSSVPAVEREKDSQSADSDKDEDEMSDDDDEEEDDEMDSDEKHQMKDRISNKLRKDPSKSIKQAENSDEAEERKSSRSEELRREARQLKRELKAAKEKKENNIKESETAKEAENTVANSALEEYLKEKEKYEEVRKKNTNKGVSREQQTLALLDRFKSKLTQAITEPPKEEEASDVDEENDKGWLSHVLQFEEKSGKVKDANMQDEDTFEIYDPRNPVNKRRREESKKIMKQKKERR.

The PPIase cyclophilin-type domain occupies 11 to 166 (SNGKVLLKTT…NPHKIKCTEV (156 aa)). Disordered regions lie at residues 203-355 (LLSF…AENT) and 401-477 (TQAI…KERR). The segment covering 208 to 218 (EEAEEDEEEVN) has biased composition (acidic residues). 2 stretches are compositionally biased toward basic and acidic residues: residues 230-240 (SSHDLLKDDPR) and 247-258 (VEREKDSQSADS). The span at 259 to 279 (DKDEDEMSDDDDEEEDDEMDS) shows a compositional bias: acidic residues. Basic and acidic residues-rich tracts occupy residues 280–299 (DEKH…DPSK), 311–353 (EERK…KEAE), and 430–442 (QFEE…KDAN). The stretch at 308–381 (DEAEERKSSR…EEVRKKNTNK (74 aa)) forms a coiled coil.

Belongs to the cyclophilin-type PPIase family. In terms of assembly, part of the activated spliceosome B/catalytic step 1 spliceosome, one of the forms of the spliceosome which has a well-formed active site but still cannot catalyze the branching reaction and is composed at least of 52 proteins, the U2, U5 and U6 snRNAs and the pre-mRNA. Recruited during early steps of activated spliceosome B maturation, it is probably one of the first proteins released from this complex as he matures to the spliceosome C complex. Component of the minor spliceosome, which splices U12-type introns.

The protein resides in the nucleus. As part of the spliceosome, plays a role in pre-mRNA splicing. Probable inactive PPIase with no peptidyl-prolyl cis-trans isomerase activity. The chain is Spliceosome-associated protein CWC27 homolog (cwc27) from Xenopus laevis (African clawed frog).